Consider the following 426-residue polypeptide: Glutamate-1-semialdehyde 2,1-aminomutase (426 aa).

Residue lysine 265 is modified to N6-(pyridoxal phosphate)lysine.

Belongs to the class-III pyridoxal-phosphate-dependent aminotransferase family. HemL subfamily. In terms of assembly, homodimer. Requires pyridoxal 5'-phosphate as cofactor.

It is found in the cytoplasm. The enzyme catalyses (S)-4-amino-5-oxopentanoate = 5-aminolevulinate. It participates in porphyrin-containing compound metabolism; protoporphyrin-IX biosynthesis; 5-aminolevulinate from L-glutamyl-tRNA(Glu): step 2/2. This is Glutamate-1-semialdehyde 2,1-aminomutase from Pectobacterium atrosepticum (strain SCRI 1043 / ATCC BAA-672) (Erwinia carotovora subsp. atroseptica).